Consider the following 148-residue polypeptide: D-aminoacyl-tRNA deacylase (148 aa).

The Gly-cisPro motif, important for rejection of L-amino acids signature appears at 137 to 138 (GP).

It belongs to the DTD family. In terms of assembly, homodimer.

The protein localises to the cytoplasm. It catalyses the reaction glycyl-tRNA(Ala) + H2O = tRNA(Ala) + glycine + H(+). The enzyme catalyses a D-aminoacyl-tRNA + H2O = a tRNA + a D-alpha-amino acid + H(+). An aminoacyl-tRNA editing enzyme that deacylates mischarged D-aminoacyl-tRNAs. Also deacylates mischarged glycyl-tRNA(Ala), protecting cells against glycine mischarging by AlaRS. Acts via tRNA-based rather than protein-based catalysis; rejects L-amino acids rather than detecting D-amino acids in the active site. By recycling D-aminoacyl-tRNA to D-amino acids and free tRNA molecules, this enzyme counteracts the toxicity associated with the formation of D-aminoacyl-tRNA entities in vivo and helps enforce protein L-homochirality. This Finegoldia magna (strain ATCC 29328 / DSM 20472 / WAL 2508) (Peptostreptococcus magnus) protein is D-aminoacyl-tRNA deacylase.